The chain runs to 136 residues: Protein LITTLE ZIPPER 1 (136 aa).

Residues 97–122 adopt a coiled-coil conformation; the sequence is ENQNIIRENEKLKKKALLLHQENKTL.

As to quaternary structure, interacts with REV. As to expression, expressed in the adaxial epidermis of the cotyledons and in the vascular cylinder of wild-type torpedo stage embryos.

Its function is as follows. Competitive inhibitor of the HD-ZIPIII transcription factors in shoot apical meristem (SAM) development. Acts by forming non-functional heterodimers. Part of a negative feedback loop. Essential for proper functioning of stem cells in the SAM. This is Protein LITTLE ZIPPER 1 from Arabidopsis thaliana (Mouse-ear cress).